Consider the following 426-residue polypeptide: Serine--tRNA ligase (426 aa).

231–233 is a binding site for L-serine; sequence TAE. ATP contacts are provided by residues 262 to 264 and Val-278; that span reads RRE. An L-serine-binding site is contributed by Glu-285. 349–352 provides a ligand contact to ATP; sequence EVSS. Ser-384 is a binding site for L-serine.

It belongs to the class-II aminoacyl-tRNA synthetase family. Type-1 seryl-tRNA synthetase subfamily. As to quaternary structure, homodimer. The tRNA molecule binds across the dimer.

It localises to the cytoplasm. The enzyme catalyses tRNA(Ser) + L-serine + ATP = L-seryl-tRNA(Ser) + AMP + diphosphate + H(+). It carries out the reaction tRNA(Sec) + L-serine + ATP = L-seryl-tRNA(Sec) + AMP + diphosphate + H(+). The protein operates within aminoacyl-tRNA biosynthesis; selenocysteinyl-tRNA(Sec) biosynthesis; L-seryl-tRNA(Sec) from L-serine and tRNA(Sec): step 1/1. Catalyzes the attachment of serine to tRNA(Ser). Is also able to aminoacylate tRNA(Sec) with serine, to form the misacylated tRNA L-seryl-tRNA(Sec), which will be further converted into selenocysteinyl-tRNA(Sec). In Chlamydia caviae (strain ATCC VR-813 / DSM 19441 / 03DC25 / GPIC) (Chlamydophila caviae), this protein is Serine--tRNA ligase.